The primary structure comprises 1538 residues: CLIP-associating protein 1 (1538 aa).

HEAT repeat units follow at residues 87 to 124 and 163 to 200; these read AQIGTVLPSLIDRLGDAKDSVREQDQTLLLKIMDQAAN and LTLSKIVPHICNLLGDPNSQVRDAAINSLVEIYRHVGE. Residues 235-292 form a disordered region; it reads SANDKNFDDEDSVDGNRPSSASSTSSKAPPSSRRNVGMGTTRRLGSSTLGSKSSAAKE. The residue at position 246 (serine 246) is a Phosphoserine. Residues 251 to 268 show a composition bias toward low complexity; it reads RPSSASSTSSKAPPSSRR. 2 HEAT repeats span residues 405 to 440 and 441 to 477; these read HGAEAIMPTIFNLIPNSAKIMATSGVVAVRLIIRHT and HIPRLIPVITSNCTSKSVAVRRRCFEFLDLLLQEWQT. The interval 543–783 is disordered; the sequence is SDSIVSLPQS…DRFGLGQPGR (241 aa). Phosphoserine occurs at positions 545, 548, 558, 559, and 568. The segment covering 548–567 has biased composition (low complexity); sequence SLPQSDRSSSSSQESLNRPL. The segment covering 574 to 594 has biased composition (low complexity); it reads TGSTTSRASTVSTKSVSTTGS. Serine 600 is subject to Phosphoserine. The segment covering 606–628 has biased composition (low complexity); sequence AAASAKSKVSSSSGTTPFSSAAA. Residues serine 636, serine 646, serine 647, and serine 649 each carry the phosphoserine modification. Polar residues predominate over residues 645–658; sequence QSSGSATNVASTPD. The residue at position 656 (threonine 656) is a Phosphothreonine. Residues 662–785 are interaction with microtubules, MAPRE1 and MAPRE3; that stretch reads RSRAKVVSQS…FGLGQPGRIP (124 aa). Residues 673–692 show a composition bias toward low complexity; the sequence is RSRSANPAGAGSRSSSPGKL. Phosphoserine is present on residues serine 684, serine 688, serine 695, and serine 705. The segment covering 693–705 has biased composition (gly residues); that stretch reads LGSGYGGLTGGSS. Threonine 711 carries the post-translational modification Phosphothreonine. Phosphoserine is present on serine 714. Residues 724–733 show a composition bias toward polar residues; sequence QGCSRETSPN. A phosphoserine mark is found at serine 787, serine 797, and serine 823. Residues 974-1011 form an HEAT 5 repeat; sequence QQFNILMRFIVDQTQTPNLKVKVAILKYIESLARQMDP. 2 disordered regions span residues 1080–1120 and 1136–1156; these read HLKN…CSHG and AKHPPPFSQPNSIPTAPSHKA. Over residues 1082–1097 the composition is skewed to polar residues; that stretch reads KNSSNTSVGSPSNTIG. Serine 1091 carries the post-translational modification Phosphoserine. 2 positions are modified to phosphothreonine: threonine 1095 and threonine 1099. Residues 1106–1115 show a composition bias toward low complexity; the sequence is SRTSPLTSPT. Position 1113 is a phosphoserine (serine 1113). Serine 1196 and serine 1223 each carry phosphoserine. The tract at residues 1215–1238 is disordered; that stretch reads VSRDGGAASPATEGRGGSEVEGGR. Residues 1254-1538 are interaction with CLIP2; it reads RAFPGPRARD…SSSSDVSTHS (285 aa). The interval 1254 to 1538 is interaction with PHLDB2 and RSN; the sequence is RAFPGPRARD…SSSSDVSTHS (285 aa). The localization to kinetochores stretch occupies residues 1256 to 1538; it reads FPGPRARDYN…SSSSDVSTHS (283 aa). Positions 1299 to 1330 form a coiled coil; sequence DHSDLVADLLKELSNHNERVEERKGALLELLK. HEAT repeat units follow at residues 1342–1379 and 1460–1497; these read EHFKTILLLLLETLGDKDHSIRALALRVLREILRNQPA and QLLVDIIPGLLQGYDNTESSVRKASVFCLVAIYSVIGE.

It belongs to the CLASP family. As to quaternary structure, interacts with CLIP2, ERC1, MAPRE1, MAPRE3, microtubules, PHLDB2 and RSN. The interaction with ERC1 may be mediated by PHLDB2. Interacts with GCC2; recruits CLASP1 to Golgi membranes. Interacts with MACF1. Interacts with mtcl2 and MTCL1.

The protein resides in the cytoplasm. Its subcellular location is the cytoskeleton. The protein localises to the microtubule organizing center. It localises to the centrosome. It is found in the chromosome. The protein resides in the centromere. Its subcellular location is the kinetochore. The protein localises to the spindle. It localises to the golgi apparatus. It is found in the trans-Golgi network. Its function is as follows. Microtubule plus-end tracking protein that promotes the stabilization of dynamic microtubules. Involved in the nucleation of noncentrosomal microtubules originating from the trans-Golgi network (TGN). Required for the polarization of the cytoplasmic microtubule arrays in migrating cells towards the leading edge of the cell. May act at the cell cortex to enhance the frequency of rescue of depolymerizing microtubules by attaching their plus-ends to cortical platforms composed of ERC1 and PHLDB2. This cortical microtubule stabilizing activity is regulated at least in part by phosphatidylinositol 3-kinase signaling. Also performs a similar stabilizing function at the kinetochore which is essential for the bipolar alignment of chromosomes on the mitotic spindle. The chain is CLIP-associating protein 1 (CLASP1) from Homo sapiens (Human).